We begin with the raw amino-acid sequence, 300 residues long: MKIAILSRDGTLYSCKRLREAAMRRGHLVEILDPLSCYMNINPAASSIHYKGRRLPHFDAVIPRIGSAITFYGTAALRQFELLGSYPLNESVAITRARDKLRSLQLLARQGIDLPITGIAHSPDDTSDLIKMVGGAPLVVKLVEGTQGIGVVLAETRQAAESVIDAFRGLNAHILVQEYIAEAKGCDIRCLVVGNEVVAAIERCAKAGDFRSNLHRGGVASIATITPRERDIAIKAAQTLGLDVAGVDILRAARGPLVMEVNASPGLEGIEKTTGVDIAGRMIQWIERHATPEFCLKIGG.

Residues 104–287 (LQLLARQGID…IAGRMIQWIE (184 aa)) form the ATP-grasp domain. ATP-binding positions include Lys141, 178–179 (EY), Asp187, and 211–213 (RSN). Residues Asp248, Glu260, and Asn262 each coordinate Mg(2+). Asp248, Glu260, and Asn262 together coordinate Mn(2+).

It belongs to the RimK family. Mg(2+) serves as cofactor. Mn(2+) is required as a cofactor.

Its function is as follows. An L-glutamate ligase that catalyzes the ATP-dependent post-translational addition of glutamate residues to the C-terminus of ribosomal protein bS6 (RpsF). Is also able to catalyze the synthesis of poly-alpha-glutamate in vitro, via ATP hydrolysis from unprotected glutamate as substrate. The number of glutamate residues added to either RpsF or to poly-alpha-glutamate changes with pH. This chain is Ribosomal protein bS6--L-glutamate ligase, found in Salmonella agona (strain SL483).